Consider the following 405-residue polypeptide: Glucose-1-phosphate adenylyltransferase (405 aa).

Residues tyrosine 96, glycine 161, 176–177 (EK), and serine 194 contribute to the alpha-D-glucose 1-phosphate site.

It belongs to the bacterial/plant glucose-1-phosphate adenylyltransferase family. In terms of assembly, homotetramer.

It catalyses the reaction alpha-D-glucose 1-phosphate + ATP + H(+) = ADP-alpha-D-glucose + diphosphate. Its pathway is glycan biosynthesis; glycogen biosynthesis. In terms of biological role, involved in the biosynthesis of ADP-glucose, a building block required for the elongation reactions to produce glycogen. Catalyzes the reaction between ATP and alpha-D-glucose 1-phosphate (G1P) to produce pyrophosphate and ADP-Glc. This is Glucose-1-phosphate adenylyltransferase from Aliivibrio fischeri (strain ATCC 700601 / ES114) (Vibrio fischeri).